Consider the following 140-residue polypeptide: Large-conductance mechanosensitive channel (140 aa).

2 consecutive transmembrane segments (helical) span residues 16–36 (VVDL…VDSI) and 86–106 (GSFL…FLMV).

Belongs to the MscL family. Homopentamer.

The protein localises to the cell inner membrane. In terms of biological role, channel that opens in response to stretch forces in the membrane lipid bilayer. May participate in the regulation of osmotic pressure changes within the cell. This is Large-conductance mechanosensitive channel from Anaeromyxobacter sp. (strain K).